The primary structure comprises 73 residues: DNA-directed RNA polymerase subunit omega (73 aa).

It belongs to the RNA polymerase subunit omega family. As to quaternary structure, in cyanobacteria the RNAP catalytic core is composed of 2 alpha, 1 beta, 1 beta', 1 gamma and 1 omega subunit. When a sigma factor is associated with the core the holoenzyme is formed, which can initiate transcription.

The catalysed reaction is RNA(n) + a ribonucleoside 5'-triphosphate = RNA(n+1) + diphosphate. In terms of biological role, promotes RNA polymerase assembly. Latches the N- and C-terminal regions of the beta' subunit thereby facilitating its interaction with the beta and alpha subunits. The protein is DNA-directed RNA polymerase subunit omega of Gloeobacter violaceus (strain ATCC 29082 / PCC 7421).